A 250-amino-acid polypeptide reads, in one-letter code: Acetylglutamate kinase (250 aa).

Substrate contacts are provided by residues 41–42 (GG), R63, and N156.

The protein belongs to the acetylglutamate kinase family. ArgB subfamily.

It localises to the cytoplasm. It carries out the reaction N-acetyl-L-glutamate + ATP = N-acetyl-L-glutamyl 5-phosphate + ADP. The protein operates within amino-acid biosynthesis; L-arginine biosynthesis; N(2)-acetyl-L-ornithine from L-glutamate: step 2/4. Its function is as follows. Catalyzes the ATP-dependent phosphorylation of N-acetyl-L-glutamate. The protein is Acetylglutamate kinase of Listeria monocytogenes serotype 4a (strain HCC23).